The primary structure comprises 170 residues: Sec-independent protein translocase protein TatB (170 aa).

A helical membrane pass occupies residues 1–21; that stretch reads MIDFGFDKIALIGAVALIVIG. Positions 69-170 are disordered; it reads AARNVEQSVS…VARFRPPRPL (102 aa). Polar residues predominate over residues 73–93; it reads VEQSVSSEVNRTSSEMNQAWE. Basic residues predominate over residues 128-137; that stretch reads HPRKNWRLKR.

It belongs to the TatB family. The Tat system comprises two distinct complexes: a TatABC complex, containing multiple copies of TatA, TatB and TatC subunits, and a separate TatA complex, containing only TatA subunits. Substrates initially bind to the TatABC complex, which probably triggers association of the separate TatA complex to form the active translocon.

Its subcellular location is the cell inner membrane. Part of the twin-arginine translocation (Tat) system that transports large folded proteins containing a characteristic twin-arginine motif in their signal peptide across membranes. Together with TatC, TatB is part of a receptor directly interacting with Tat signal peptides. TatB may form an oligomeric binding site that transiently accommodates folded Tat precursor proteins before their translocation. The chain is Sec-independent protein translocase protein TatB from Methylibium petroleiphilum (strain ATCC BAA-1232 / LMG 22953 / PM1).